The primary structure comprises 307 residues: Glycine--tRNA ligase alpha subunit (307 aa).

It belongs to the class-II aminoacyl-tRNA synthetase family. As to quaternary structure, tetramer of two alpha and two beta subunits.

It is found in the cytoplasm. It carries out the reaction tRNA(Gly) + glycine + ATP = glycyl-tRNA(Gly) + AMP + diphosphate. This Aeromonas salmonicida (strain A449) protein is Glycine--tRNA ligase alpha subunit.